The chain runs to 97 residues: Citrate lyase acyl carrier protein (97 aa).

At serine 14 the chain carries O-(phosphoribosyl dephospho-coenzyme A)serine.

Belongs to the CitD family. As to quaternary structure, oligomer with a subunit composition of (alpha,beta,gamma)6.

The protein resides in the cytoplasm. In terms of biological role, covalent carrier of the coenzyme of citrate lyase. The sequence is that of Citrate lyase acyl carrier protein from Escherichia fergusonii (strain ATCC 35469 / DSM 13698 / CCUG 18766 / IAM 14443 / JCM 21226 / LMG 7866 / NBRC 102419 / NCTC 12128 / CDC 0568-73).